The sequence spans 269 residues: Undecaprenyl-diphosphatase (269 aa).

The next 8 helical transmembrane spans lie at 3–23 (LLIK…LPIS), 41–61 (FATM…VFYY), 78–98 (GFNL…IGLL), 107–127 (LFSP…MIVI), 148–167 (SLLI…SRSA), 184–204 (AEFS…LSLL), 213–233 (LEWQ…LFVV), and 248–268 (FAYY…EKIV).

Belongs to the UppP family.

It is found in the cell membrane. The enzyme catalyses di-trans,octa-cis-undecaprenyl diphosphate + H2O = di-trans,octa-cis-undecaprenyl phosphate + phosphate + H(+). In terms of biological role, catalyzes the dephosphorylation of undecaprenyl diphosphate (UPP). Confers resistance to bacitracin. This chain is Undecaprenyl-diphosphatase, found in Thermoanaerobacter sp. (strain X514).